Reading from the N-terminus, the 724-residue chain is Probable protein phosphatase 2C 62 (724 aa).

The segment at 357-385 (DELISTSEATRHSVDEIAQKPIIDTSEKN) is disordered. A compositionally biased stretch (basic and acidic residues) spans 365–374 (ATRHSVDEIA). Residues 482–719 (DSGFASLQSP…DAVTVIISFV (238 aa)) enclose the PPM-type phosphatase domain. Aspartate 514, glycine 515, aspartate 643, and aspartate 710 together coordinate Mn(2+).

The protein belongs to the PP2C family. The cofactor is Mg(2+). Mn(2+) is required as a cofactor.

It carries out the reaction O-phospho-L-seryl-[protein] + H2O = L-seryl-[protein] + phosphate. It catalyses the reaction O-phospho-L-threonyl-[protein] + H2O = L-threonyl-[protein] + phosphate. This is Probable protein phosphatase 2C 62 from Arabidopsis thaliana (Mouse-ear cress).